The sequence spans 418 residues: Pyruvate kinase isozyme G, chloroplastic (418 aa).

Residues aspartate 14 and threonine 15 each coordinate K(+). Arginine 21 lines the ATP pocket. Glutamate 165 is a Mg(2+) binding site. Positions 188, 189, and 221 each coordinate substrate. Aspartate 189 contributes to the Mg(2+) binding site.

It belongs to the pyruvate kinase family. Mg(2+) is required as a cofactor. The cofactor is K(+). As to expression, expressed in developing and germinating endosperm and in roots.

The protein localises to the plastid. Its subcellular location is the chloroplast. It carries out the reaction pyruvate + ATP = phosphoenolpyruvate + ADP + H(+). It participates in carbohydrate degradation; glycolysis; pyruvate from D-glyceraldehyde 3-phosphate: step 5/5. This is Pyruvate kinase isozyme G, chloroplastic from Ricinus communis (Castor bean).